The primary structure comprises 229 residues: MEAIAKYDFKATADDELSFKRGDVLKVLNEECDQNWYKAELNGKDGFIPKNYIEMKAHPWFFGKIPRAKAEEMLGKQRHDGAFLIRESESAPGDFSLSVKFGNDVQHFKVLRDGAGKYFLWVVKFNSLNELVDYHRSTSVSRNQQIFLRDIEQVPQVHGGDRATSLPQQPTYVQALFDFDPQEDGELGFRRGDFIQVVDNSDPNWWKGTCLSQTGMFPRNYVTPVNRNM.

In terms of domain architecture, SH3 1 spans 1-58 (MEAIAKYDFKATADDELSFKRGDVLKVLNEECDQNWYKAELNGKDGFIPKNYIEMKAH). The 93-residue stretch at 60–152 (WFFGKIPRAK…NQQIFLRDIE (93 aa)) folds into the SH2 domain. One can recognise an SH3 2 domain in the interval 168 to 227 (QQPTYVQALFDFDPQEDGELGFRRGDFIQVVDNSDPNWWKGTCLSQTGMFPRNYVTPVNR).

This sequence belongs to the GRB2/sem-5/DRK family.

Its subcellular location is the nucleus. It is found in the cytoplasm. It localises to the endosome. The protein localises to the golgi apparatus. Adapter protein that provides a critical link between cell surface growth factor receptors and the Ras signaling pathway. Promotes meiotic reinitiation during oocyte maturation. The polypeptide is Growth factor receptor-bound protein 2-A (grb2-a) (Xenopus laevis (African clawed frog)).